A 103-amino-acid polypeptide reads, in one-letter code: Viscotoxin-B (103 aa).

Positions 1 to 6 (FRNVES) are cleaved as a signal peptide. Disulfide bonds link Cys9–Cys46, Cys10–Cys38, and Cys22–Cys32. Residues 53–103 (FYCTLGCQSSKCASITTPPNSEVDAEAVRCKAACSNLCDFGVTTNQEIQDD) constitute a propeptide, acidic domain.

Belongs to the plant thionin (TC 1.C.44) family.

It is found in the secreted. Thionins are small plant proteins which are toxic to animal cells. They seem to exert their toxic effect at the level of the cell membrane. Their precise function is not known. This chain is Viscotoxin-B (THI2.2), found in Viscum album (European mistletoe).